We begin with the raw amino-acid sequence, 177 residues long: Large ribosomal subunit protein uL6 (177 aa).

The protein belongs to the universal ribosomal protein uL6 family. Part of the 50S ribosomal subunit.

This protein binds to the 23S rRNA, and is important in its secondary structure. It is located near the subunit interface in the base of the L7/L12 stalk, and near the tRNA binding site of the peptidyltransferase center. The protein is Large ribosomal subunit protein uL6 of Cereibacter sphaeroides (strain ATCC 17029 / ATH 2.4.9) (Rhodobacter sphaeroides).